The following is a 151-amino-acid chain: UPF0178 protein GSU0171 (151 aa).

This sequence belongs to the UPF0178 family.

The chain is UPF0178 protein GSU0171 from Geobacter sulfurreducens (strain ATCC 51573 / DSM 12127 / PCA).